Here is a 240-residue protein sequence, read N- to C-terminus: MKIVEVKNLTYRINDFEILKNVTFSVEEGEFVGIIGPNGAGKTTLVRILVGDIKNYEGKVEVRGKIGYLPQLHQVQREFPITVKEFAAMGMYGRYRKIDWEKVRSTLKDVGILHKENDPIKNLSGGEFQRLSLARALLSDPDILVLDEPEAGVDEMGKASFYELLNRLRKEKNITVIMVSHDIGMVFKECSTIMCLNRTLHCHGPTETINPEDLKKIFTDFDIWIRGTRHYEIYHGRERD.

The ABC transporter domain occupies 4–223 (VEVKNLTYRI…LKKIFTDFDI (220 aa)). 36–43 (GPNGAGKT) contributes to the ATP binding site.

Belongs to the ABC transporter superfamily.

Its function is as follows. Part of an ATP-driven transport system TM_0123/TM_0124/TM_0125 for a metal. Probably responsible for energy coupling to the transport system. The sequence is that of Probable metal transport system ATP-binding protein TM_0124 from Thermotoga maritima (strain ATCC 43589 / DSM 3109 / JCM 10099 / NBRC 100826 / MSB8).